The following is a 725-amino-acid chain: Methionine--tRNA ligase (725 aa).

The 'HIGH' region motif lies at 27 to 37 (PYANGQIHIGH). 4 residues coordinate Zn(2+): Cys158, Cys161, Cys171, and Cys174. The 'KMSKS' region signature appears at 348–352 (KMSKS). Lys351 is a binding site for ATP. Positions 619–725 (DFAKIDLRIA…SGAKPGMRVK (107 aa)) constitute a tRNA-binding domain.

It belongs to the class-I aminoacyl-tRNA synthetase family. MetG type 1 subfamily. Homodimer. It depends on Zn(2+) as a cofactor.

Its subcellular location is the cytoplasm. It carries out the reaction tRNA(Met) + L-methionine + ATP = L-methionyl-tRNA(Met) + AMP + diphosphate. Is required not only for elongation of protein synthesis but also for the initiation of all mRNA translation through initiator tRNA(fMet) aminoacylation. In Burkholderia pseudomallei (strain 668), this protein is Methionine--tRNA ligase.